A 206-amino-acid polypeptide reads, in one-letter code: FMN-dependent NADH:quinone oxidoreductase (206 aa).

FMN is bound by residues Ser-15–Ser-17, Met-94–Phe-97, and Thr-138–Gly-141.

It belongs to the azoreductase type 1 family. As to quaternary structure, homodimer. Requires FMN as cofactor.

The catalysed reaction is 2 a quinone + NADH + H(+) = 2 a 1,4-benzosemiquinone + NAD(+). It catalyses the reaction N,N-dimethyl-1,4-phenylenediamine + anthranilate + 2 NAD(+) = 2-(4-dimethylaminophenyl)diazenylbenzoate + 2 NADH + 2 H(+). Its function is as follows. Quinone reductase that provides resistance to thiol-specific stress caused by electrophilic quinones. In terms of biological role, also exhibits azoreductase activity. Catalyzes the reductive cleavage of the azo bond in aromatic azo compounds to the corresponding amines. The chain is FMN-dependent NADH:quinone oxidoreductase from Sinorhizobium medicae (strain WSM419) (Ensifer medicae).